Reading from the N-terminus, the 354-residue chain is GTPase Obg (354 aa).

The Obg domain occupies methionine 1–leucine 159. In terms of domain architecture, OBG-type G spans alanine 160–glutamate 334. Residues glycine 166 to serine 173, phenylalanine 191 to histidine 195, aspartate 213 to glycine 216, asparagine 284 to aspartate 287, and serine 315 to methionine 317 each bind GTP. Positions 173 and 193 each coordinate Mg(2+).

Belongs to the TRAFAC class OBG-HflX-like GTPase superfamily. OBG GTPase family. As to quaternary structure, monomer. Mg(2+) serves as cofactor.

The protein resides in the cytoplasm. An essential GTPase which binds GTP, GDP and possibly (p)ppGpp with moderate affinity, with high nucleotide exchange rates and a fairly low GTP hydrolysis rate. Plays a role in control of the cell cycle, stress response, ribosome biogenesis and in those bacteria that undergo differentiation, in morphogenesis control. The sequence is that of GTPase Obg from Nitrosospira multiformis (strain ATCC 25196 / NCIMB 11849 / C 71).